We begin with the raw amino-acid sequence, 337 residues long: Phosphate acyltransferase (337 aa).

This sequence belongs to the PlsX family. In terms of assembly, homodimer. Probably interacts with PlsY.

Its subcellular location is the cytoplasm. It carries out the reaction a fatty acyl-[ACP] + phosphate = an acyl phosphate + holo-[ACP]. The protein operates within lipid metabolism; phospholipid metabolism. Catalyzes the reversible formation of acyl-phosphate (acyl-PO(4)) from acyl-[acyl-carrier-protein] (acyl-ACP). This enzyme utilizes acyl-ACP as fatty acyl donor, but not acyl-CoA. This chain is Phosphate acyltransferase, found in Halalkalibacterium halodurans (strain ATCC BAA-125 / DSM 18197 / FERM 7344 / JCM 9153 / C-125) (Bacillus halodurans).